The primary structure comprises 639 residues: 1-deoxy-D-xylulose-5-phosphate synthase (639 aa).

Thiamine diphosphate-binding positions include His79 and 120–122 (AHS). Asp151 is a Mg(2+) binding site. Thiamine diphosphate contacts are provided by residues 152-153 (GA), Asn180, Tyr289, and Glu371. Position 180 (Asn180) interacts with Mg(2+).

This sequence belongs to the transketolase family. DXPS subfamily. Homodimer. Mg(2+) is required as a cofactor. The cofactor is thiamine diphosphate.

The catalysed reaction is D-glyceraldehyde 3-phosphate + pyruvate + H(+) = 1-deoxy-D-xylulose 5-phosphate + CO2. It participates in metabolic intermediate biosynthesis; 1-deoxy-D-xylulose 5-phosphate biosynthesis; 1-deoxy-D-xylulose 5-phosphate from D-glyceraldehyde 3-phosphate and pyruvate: step 1/1. Catalyzes the acyloin condensation reaction between C atoms 2 and 3 of pyruvate and glyceraldehyde 3-phosphate to yield 1-deoxy-D-xylulose-5-phosphate (DXP). This is 1-deoxy-D-xylulose-5-phosphate synthase from Allorhizobium ampelinum (strain ATCC BAA-846 / DSM 112012 / S4) (Agrobacterium vitis (strain S4)).